A 531-amino-acid polypeptide reads, in one-letter code: Maturase K (531 aa).

The protein belongs to the intron maturase 2 family. MatK subfamily.

It is found in the plastid. It localises to the chloroplast. In terms of biological role, usually encoded in the trnK tRNA gene intron. Probably assists in splicing its own and other chloroplast group II introns. This is Maturase K from Ephedra sinica (Chinese ephedra).